The following is a 486-amino-acid chain: Katanin p60 ATPase-containing subunit A1 (486 aa).

Positions 103–174 are disordered; sequence RSSPLPVRRP…NKAEVSEKEV (72 aa). Over residues 143–174 the composition is skewed to basic and acidic residues; the sequence is NGDRAKPLKGKEKKEAKPKDDKNKAEVSEKEV. ATP is bound at residue 244 to 251; it reads GPPGTGKT.

The protein belongs to the AAA ATPase family. Katanin p60 subunit A1 subfamily. In terms of assembly, can homooligomerize into hexameric rings, which may be promoted by interaction with microtubules. Interacts with katnb1, which may serve as a targeting subunit.

Its subcellular location is the cytoplasm. The protein resides in the cytoskeleton. It is found in the microtubule organizing center. It localises to the centrosome. The protein localises to the spindle pole. Its subcellular location is the spindle. The enzyme catalyses n ATP + n H2O + a microtubule = n ADP + n phosphate + (n+1) alpha/beta tubulin heterodimers.. ATPase activity is stimulated by microtubules, which promote homooligomerization. ATP-dependent microtubule severing is stimulated by interaction with katnb1. Catalytic subunit of a complex which severs microtubules in an ATP-dependent manner. Microtubule severing may promote rapid reorganization of cellular microtubule arrays and the release of microtubules from the centrosome following nucleation. The chain is Katanin p60 ATPase-containing subunit A1 (katna1) from Salmo salar (Atlantic salmon).